Consider the following 604-residue polypeptide: Putative ankyrin repeat protein L56 (604 aa).

ANK repeat units follow at residues 77 to 106 (IDRY…DILV), 135 to 164 (FFKS…NADG), 166 to 189 (LSAC…YDDN), 190 to 219 (TIYH…EDKR), 221 to 247 (NVFI…KWKI), 248 to 277 (DVEF…DSKY), 314 to 341 (KFSK…NENV), 342 to 371 (DLRE…EFTD), 380 to 410 (EHIT…SRSY), 445 to 474 (YSQA…DIKP), 475 to 504 (ITNI…DITI), 505 to 534 (NDNR…DIRT), and 535 to 565 (DDDY…EPSN).

The sequence is that of Putative ankyrin repeat protein L56 from Acanthamoeba polyphaga (Amoeba).